The primary structure comprises 159 residues: Ribosome-binding factor A (159 aa).

The segment at threonine 127–serine 159 is disordered. A compositionally biased stretch (acidic residues) spans aspartate 142–serine 159.

This sequence belongs to the RbfA family. As to quaternary structure, monomer. Binds 30S ribosomal subunits, but not 50S ribosomal subunits or 70S ribosomes.

Its subcellular location is the cytoplasm. Functionally, one of several proteins that assist in the late maturation steps of the functional core of the 30S ribosomal subunit. Associates with free 30S ribosomal subunits (but not with 30S subunits that are part of 70S ribosomes or polysomes). Required for efficient processing of 16S rRNA. May interact with the 5'-terminal helix region of 16S rRNA. The chain is Ribosome-binding factor A from Beutenbergia cavernae (strain ATCC BAA-8 / DSM 12333 / CCUG 43141 / JCM 11478 / NBRC 16432 / NCIMB 13614 / HKI 0122).